Consider the following 365-residue polypeptide: Holliday junction branch migration complex subunit RuvB (365 aa).

Residues 1–191 form a large ATPase domain (RuvB-L) region; that stretch reads MSPELGGGYD…FGFTAHMDFY (191 aa). Residues L30, R31, G72, K75, T76, S77, 138-140, R181, Y191, and R228 each bind ATP; that span reads EDF. Residue T76 participates in Mg(2+) binding. The segment at 192–262 is small ATPAse domain (RuvB-S); it reads EPAELKQILM…IAHAALAVYD (71 aa). Residues 265 to 365 form a head domain (RuvB-H) region; that stretch reads QLGLDRLDRS…QASLFDPEDP (101 aa). R320 and R325 together coordinate DNA.

This sequence belongs to the RuvB family. In terms of assembly, homohexamer. Forms an RuvA(8)-RuvB(12)-Holliday junction (HJ) complex. HJ DNA is sandwiched between 2 RuvA tetramers; dsDNA enters through RuvA and exits via RuvB. An RuvB hexamer assembles on each DNA strand where it exits the tetramer. Each RuvB hexamer is contacted by two RuvA subunits (via domain III) on 2 adjacent RuvB subunits; this complex drives branch migration. In the full resolvosome a probable DNA-RuvA(4)-RuvB(12)-RuvC(2) complex forms which resolves the HJ.

The protein resides in the cytoplasm. The catalysed reaction is ATP + H2O = ADP + phosphate + H(+). In terms of biological role, the RuvA-RuvB-RuvC complex processes Holliday junction (HJ) DNA during genetic recombination and DNA repair, while the RuvA-RuvB complex plays an important role in the rescue of blocked DNA replication forks via replication fork reversal (RFR). RuvA specifically binds to HJ cruciform DNA, conferring on it an open structure. The RuvB hexamer acts as an ATP-dependent pump, pulling dsDNA into and through the RuvAB complex. RuvB forms 2 homohexamers on either side of HJ DNA bound by 1 or 2 RuvA tetramers; 4 subunits per hexamer contact DNA at a time. Coordinated motions by a converter formed by DNA-disengaged RuvB subunits stimulates ATP hydrolysis and nucleotide exchange. Immobilization of the converter enables RuvB to convert the ATP-contained energy into a lever motion, pulling 2 nucleotides of DNA out of the RuvA tetramer per ATP hydrolyzed, thus driving DNA branch migration. The RuvB motors rotate together with the DNA substrate, which together with the progressing nucleotide cycle form the mechanistic basis for DNA recombination by continuous HJ branch migration. Branch migration allows RuvC to scan DNA until it finds its consensus sequence, where it cleaves and resolves cruciform DNA. The polypeptide is Holliday junction branch migration complex subunit RuvB (Rhodococcus opacus (strain B4)).